The primary structure comprises 301 residues: Phosphoribosylaminoimidazole-succinocarboxamide synthase (301 aa).

The protein belongs to the SAICAR synthetase family.

It carries out the reaction 5-amino-1-(5-phospho-D-ribosyl)imidazole-4-carboxylate + L-aspartate + ATP = (2S)-2-[5-amino-1-(5-phospho-beta-D-ribosyl)imidazole-4-carboxamido]succinate + ADP + phosphate + 2 H(+). It functions in the pathway purine metabolism; IMP biosynthesis via de novo pathway; 5-amino-1-(5-phospho-D-ribosyl)imidazole-4-carboxamide from 5-amino-1-(5-phospho-D-ribosyl)imidazole-4-carboxylate: step 1/2. The chain is Phosphoribosylaminoimidazole-succinocarboxamide synthase from Mycolicibacterium vanbaalenii (strain DSM 7251 / JCM 13017 / BCRC 16820 / KCTC 9966 / NRRL B-24157 / PYR-1) (Mycobacterium vanbaalenii).